Reading from the N-terminus, the 389-residue chain is Lipid-A-disaccharide synthase (389 aa).

Belongs to the LpxB family.

The catalysed reaction is a lipid X + a UDP-2-N,3-O-bis[(3R)-3-hydroxyacyl]-alpha-D-glucosamine = a lipid A disaccharide + UDP + H(+). It functions in the pathway bacterial outer membrane biogenesis; LPS lipid A biosynthesis. In terms of biological role, condensation of UDP-2,3-diacylglucosamine and 2,3-diacylglucosamine-1-phosphate to form lipid A disaccharide, a precursor of lipid A, a phosphorylated glycolipid that anchors the lipopolysaccharide to the outer membrane of the cell. The polypeptide is Lipid-A-disaccharide synthase (Albidiferax ferrireducens (strain ATCC BAA-621 / DSM 15236 / T118) (Rhodoferax ferrireducens)).